The chain runs to 673 residues: Methionine--tRNA ligase (673 aa).

The 'HIGH' region signature appears at 15-25 (PYANGPIHLGH). The Zn(2+) site is built by C146, C149, C159, and C162. Residues 332–336 (KMSKS) carry the 'KMSKS' region motif. Residue K335 coordinates ATP. A tRNA-binding domain is found at 572-673 (DFAKLDLRIA…EGAQPGMRVK (102 aa)).

The protein belongs to the class-I aminoacyl-tRNA synthetase family. MetG type 1 subfamily. In terms of assembly, homodimer. The cofactor is Zn(2+).

The protein resides in the cytoplasm. It carries out the reaction tRNA(Met) + L-methionine + ATP = L-methionyl-tRNA(Met) + AMP + diphosphate. Its function is as follows. Is required not only for elongation of protein synthesis but also for the initiation of all mRNA translation through initiator tRNA(fMet) aminoacylation. The polypeptide is Methionine--tRNA ligase (Shewanella loihica (strain ATCC BAA-1088 / PV-4)).